Here is a 359-residue protein sequence, read N- to C-terminus: Acyl-CoA desaturase (359 aa).

Residues 1 to 72 (MPAHLLQEEI…EGPKPKLEYV (72 aa)) are Cytoplasmic-facing. Residues 73–93 (WRNIILMGLLHLGALYGITLI) form a helical membrane-spanning segment. Asn75 serves as a coordination point for substrate. At 94-97 (PTCK) the chain is on the lumenal side. A helical transmembrane segment spans residues 98-118 (IYTFLWVLFYYVISALGITAG). The Cytoplasmic portion of the chain corresponds to 119–217 (VHRLWSHRTY…EKLVMFQRRY (99 aa)). Positions 120 and 125 each coordinate Fe cation. The Histidine box-1 signature appears at 120 to 125 (HRLWSH). Substrate-binding residues include Asn148, Arg155, and Asp156. His157, His160, and His161 together coordinate Fe cation. The Histidine box-2 signature appears at 157 to 161 (HRAHH). Substrate-binding residues include Arg188 and Lys189. Residue Ser203 is modified to Phosphoserine. Residues 218-237 (YKPGVLLLCFILPTLVPWYL) traverse the membrane as a helical segment. At 238 to 241 (WGES) the chain is on the lumenal side. Residues 242-263 (FQNSLFFATFLRYAVVLNATWL) form a helical membrane-spanning segment. Residue Trp262 coordinates substrate. The Cytoplasmic segment spans residues 264-359 (VNSAAHMYGY…RTGEESYKSG (96 aa)). Residues His269, His298, His301, and His302 each contribute to the Fe cation site. Positions 298-302 (HNYHH) match the Histidine box-3 motif.

It belongs to the fatty acid desaturase type 1 family. Fe(2+) is required as a cofactor.

It is found in the endoplasmic reticulum membrane. It carries out the reaction octadecanoyl-CoA + 2 Fe(II)-[cytochrome b5] + O2 + 2 H(+) = (9Z)-octadecenoyl-CoA + 2 Fe(III)-[cytochrome b5] + 2 H2O. In terms of biological role, stearoyl-CoA desaturase that utilizes O(2) and electrons from reduced cytochrome b5 to introduce the first double bond into saturated fatty acyl-CoA substrates. Catalyzes the insertion of a cis double bond at the delta-9 position into fatty acyl-CoA substrates including palmitoyl-CoA and stearoyl-CoA. Gives rise to a mixture of 16:1 and 18:1 unsaturated fatty acids. Plays an important role in lipid biosynthesis. Plays an important role in regulating the expression of genes that are involved in lipogenesis and in regulating mitochondrial fatty acid oxidation. Plays an important role in body energy homeostasis. Contributes to the biosynthesis of membrane phospholipids, cholesterol esters and triglycerides. The chain is Acyl-CoA desaturase (SCD) from Ovis aries (Sheep).